We begin with the raw amino-acid sequence, 492 residues long: Cysteine--tRNA ligase (492 aa).

A Zn(2+)-binding site is contributed by Cys31. A 'HIGH' region motif is present at residues 33-43 (PTVYGDPHLGH). Residues Cys226, His251, and Glu255 each coordinate Zn(2+). The short motif at 283–287 (KMGKS) is the 'KMSKS' region element. An ATP-binding site is contributed by Lys286.

Belongs to the class-I aminoacyl-tRNA synthetase family. As to quaternary structure, monomer. It depends on Zn(2+) as a cofactor.

The protein localises to the cytoplasm. The enzyme catalyses tRNA(Cys) + L-cysteine + ATP = L-cysteinyl-tRNA(Cys) + AMP + diphosphate. The protein is Cysteine--tRNA ligase of Azobacteroides pseudotrichonymphae genomovar. CFP2.